A 129-amino-acid polypeptide reads, in one-letter code: Large ribosomal subunit protein bL12 (129 aa).

This sequence belongs to the bacterial ribosomal protein bL12 family. In terms of assembly, homodimer. Part of the ribosomal stalk of the 50S ribosomal subunit. Forms a multimeric L10(L12)X complex, where L10 forms an elongated spine to which 2 to 4 L12 dimers bind in a sequential fashion. Binds GTP-bound translation factors.

Its function is as follows. Forms part of the ribosomal stalk which helps the ribosome interact with GTP-bound translation factors. Is thus essential for accurate translation. This chain is Large ribosomal subunit protein bL12, found in Maridesulfovibrio salexigens (strain ATCC 14822 / DSM 2638 / NCIMB 8403 / VKM B-1763) (Desulfovibrio salexigens).